We begin with the raw amino-acid sequence, 499 residues long: Glucosylglycerol-phosphate synthase (499 aa).

Belongs to the glycosyltransferase 20 family. Interacts with GGP-P. Seems to be degraded, at least in vitro, by FtsH2. In an ftsH2 disruption strain inactive GGPS accumulates.

It localises to the cytoplasm. It catalyses the reaction ADP-alpha-D-glucose + sn-glycerol 3-phosphate = 2-O-(alpha-D-glucopyranosyl)-sn-glycerol 3-phosphate + ADP + H(+). It functions in the pathway glycan metabolism; glucosylglycerol biosynthesis. Its function is as follows. Involved in salt tolerance by producing GG-phosphate from ADP-glucose and glycerol-3-phosphate (G3P), an intermediate in the synthesis of the osmolyte glucosylglycerol (GG). The polypeptide is Glucosylglycerol-phosphate synthase (ggpS) (Synechocystis sp. (strain ATCC 27184 / PCC 6803 / Kazusa)).